The sequence spans 219 residues: MLGLHGRKPAQVIVEPVAKLMIKLKVTPNQLTLVSAGLTVGVALLLIPTGHLIWAAVLTGLFAAFDMIDGTVARMQGGGTKFGATLDATCDRITDGALFGAITWWLVYSYDAPQALVAASLVCLVASQVISYVKARGEASGFTMDGGLVERPERLIVSLVGLGLTGMGVPYAIDVALWALAAGSIYTVVQRLVMAGKSPLAKEFTKAPAGAKADYSNTK.

N29 to T32 is an a CDP-1,2-diacyl-sn-glycerol binding site. 2 consecutive transmembrane segments (helical) span residues L31–I47 and I53–V72. Residues D66 and D69 each coordinate Mg(2+). G70, R74, and T80 together coordinate a CDP-1,2-diacyl-sn-glycerol. Mg(2+) contacts are provided by D87 and D91. D91 (proton acceptor) is an active-site residue. 4 consecutive transmembrane segments (helical) span residues I93–Y110, L116–V133, R154–Y171, and L177–M194.

Belongs to the CDP-alcohol phosphatidyltransferase class-I family. Homodimer. Mg(2+) serves as cofactor.

Its subcellular location is the cell membrane. The enzyme catalyses a CDP-1,2-diacyl-sn-glycerol + 1D-myo-inositol 3-phosphate = a 1,2-diacyl-sn-glycero-3-phospho-(1D-myo-inositol-3-phosphate) + CMP + H(+). The catalysed reaction is 1,2-di-(9Z-octadecenoyl)-sn-glycero-3-cytidine-5'-diphosphate + 1D-myo-inositol 3-phosphate = 1,2-di-(9Z-octadecenoyl)-sn-glycero-3-phospho-(1D-myo-inositol-3-phosphate) + CMP + H(+). The protein operates within phospholipid metabolism; phosphatidylinositol phosphate biosynthesis. In terms of biological role, catalyzes the conjugation of the 1'-hydroxyl group of D-myo-inositol-3-phosphate (also named L-myo-inositol-1-phosphate) with a lipid tail of cytidine diphosphate diacylglycerol (CDP-DAG), forming phosphatidylinositol phosphate (PIP) and CMP. PIP is a precursor of phosphatidylinositol (PI) which is an essential lipid required for cell wall formation. The sequence is that of Phosphatidylinositol phosphate synthase from Corynebacterium glutamicum (strain ATCC 13032 / DSM 20300 / JCM 1318 / BCRC 11384 / CCUG 27702 / LMG 3730 / NBRC 12168 / NCIMB 10025 / NRRL B-2784 / 534).